Here is a 163-residue protein sequence, read N- to C-terminus: Putative 4-hydroxy-4-methyl-2-oxoglutarate aldolase (163 aa).

Substrate is bound by residues 75 to 78 (GDQL) and Arg97. Residue Asp98 coordinates a divalent metal cation.

It belongs to the class II aldolase/RraA-like family. As to quaternary structure, homotrimer. A divalent metal cation serves as cofactor.

It catalyses the reaction 4-hydroxy-4-methyl-2-oxoglutarate = 2 pyruvate. The catalysed reaction is oxaloacetate + H(+) = pyruvate + CO2. Functionally, catalyzes the aldol cleavage of 4-hydroxy-4-methyl-2-oxoglutarate (HMG) into 2 molecules of pyruvate. Also contains a secondary oxaloacetate (OAA) decarboxylase activity due to the common pyruvate enolate transition state formed following C-C bond cleavage in the retro-aldol and decarboxylation reactions. This chain is Putative 4-hydroxy-4-methyl-2-oxoglutarate aldolase, found in Photobacterium profundum (strain SS9).